Consider the following 605-residue polypeptide: uncharacterized protein (605 aa).

Disordered stretches follow at residues 10–78 and 216–248; these read RRGG…FPPA and RAPD…VRNP. The span at 20–48 shows a compositional bias: low complexity; the sequence is AGGRPAAGGRPAAGGRPAAGSRAAAGAAG. The span at 220–233 shows a compositional bias: pro residues; the sequence is CPSPRTPMVKPPFR.

This is an uncharacterized protein from Dryophytes versicolor (chameleon treefrog).